The primary structure comprises 122 residues: Large ribosomal subunit protein uL14 (122 aa).

The protein belongs to the universal ribosomal protein uL14 family. In terms of assembly, part of the 50S ribosomal subunit. Forms a cluster with proteins L3 and L19. In the 70S ribosome, L14 and L19 interact and together make contacts with the 16S rRNA in bridges B5 and B8.

Functionally, binds to 23S rRNA. Forms part of two intersubunit bridges in the 70S ribosome. The protein is Large ribosomal subunit protein uL14 of Verminephrobacter eiseniae (strain EF01-2).